The following is a 90-amino-acid chain: Acylphosphatase (90 aa).

The region spanning 5 to 90 is the Acylphosphatase-like domain; the sequence is SFVVHVWGQV…PPQKGGFHTN (86 aa). Catalysis depends on residues arginine 20 and asparagine 38.

Belongs to the acylphosphatase family.

The enzyme catalyses an acyl phosphate + H2O = a carboxylate + phosphate + H(+). The polypeptide is Acylphosphatase (acyP) (Aeromonas salmonicida (strain A449)).